The sequence spans 454 residues: MSAFDLIVRGGTVVRGGCEVADVGVADGVISAVGPDLEGGAREEIDARGLLVLPGAIDAHVHFNEPGRTRWEGFASGTRALAAGGTTLCVEMPLNAHPPTTDGESFDLKLAAAKASAHVDFALWGGIVPGRVGRMEELAGRGVAGFKAFMSATGTPDFEAADDLTLYEGMQEAARLGLPVLVHAENRQITDALARRATSALRTTMRDYLASRPAVAELEAIGRAILLASEAGCSLHIVHVSTGRGVALVAAARERGVDVTCETCPHYLLFTDEDAVRIGAAAKCAPPLRPREEVESLWEQVLAGNVAFVTSDHSPCPPDMKAGEDMFRAWGGISGCQSLLPALLDEGYHGRGLPPERLAELLSANVARRFGFAGKGGIEEGNDADLALVDPSGEHVLREEDLHYRHPISPYVGRSFRGRVVRTILRGRTVFEGGRVVSGPAGRFVRPQREKGER.

6 residues coordinate Zn(2+): His60, His62, Lys147, His183, His239, and Asp312. An N6-carboxylysine modification is found at Lys147.

It belongs to the metallo-dependent hydrolases superfamily. Allantoinase family. Homotetramer. The cofactor is Zn(2+). Carboxylation allows a single lysine to coordinate two zinc ions.

The catalysed reaction is (S)-allantoin + H2O = allantoate + H(+). It participates in nitrogen metabolism; (S)-allantoin degradation; allantoate from (S)-allantoin: step 1/1. In terms of biological role, catalyzes the conversion of allantoin (5-ureidohydantoin) to allantoic acid by hydrolytic cleavage of the five-member hydantoin ring. This is Allantoinase from Rubrobacter xylanophilus (strain DSM 9941 / JCM 11954 / NBRC 16129 / PRD-1).